We begin with the raw amino-acid sequence, 749 residues long: Transcription factor RFX3 (749 aa).

A DNA-binding region (RFX-type winged-helix) is located at residues 183 to 258 (HLQWLLDNYE…YHYYGIRVKP (76 aa)). Residues 663–699 (VSPGNLDKDEGSEVESEMDEELDDSSEPQAKREKTEL) form a disordered region. Residues 674–688 (SEVESEMDEELDDSS) are compositionally biased toward acidic residues.

Belongs to the RFX family. In terms of assembly, heterodimer; heterodimerizes with RFX1 and RFX2, and RFX6.

It is found in the nucleus. In terms of biological role, transcription factor required for ciliogenesis and islet cell differentiation during endocrine pancreas development. Essential for the differentiation of nodal monocilia and left-right asymmetry specification during embryogenesis. Required for the biogenesis of motile cilia by governing growth and beating efficiency of motile cells. Also required for ciliated ependymal cell differentiation. Regulates the expression of genes involved in ciliary assembly (DYNC2LI1, FOXJ1 and BBS4) and genes involved in ciliary motility (DNAH11, DNAH9 and DNAH5). Together with RFX6, participates in the differentiation of 4 of the 5 islet cell types during endocrine pancreas development, with the exception of pancreatic PP (polypeptide-producing) cells. Regulates transcription by forming a heterodimer with another RFX protein and binding to the X-box in the promoter of target genes. Represses transcription of MAP1A in non-neuronal cells but not in neuronal cells. The chain is Transcription factor RFX3 (RFX3) from Macaca fascicularis (Crab-eating macaque).